Reading from the N-terminus, the 218-residue chain is Small ribosomal subunit protein uS3 (218 aa).

Residues Ile-38–Lys-106 form the KH type-2 domain.

Belongs to the universal ribosomal protein uS3 family. Part of the 30S ribosomal subunit. Forms a tight complex with proteins S10 and S14.

Functionally, binds the lower part of the 30S subunit head. Binds mRNA in the 70S ribosome, positioning it for translation. The protein is Small ribosomal subunit protein uS3 of Ligilactobacillus salivarius (strain UCC118) (Lactobacillus salivarius).